Reading from the N-terminus, the 51-residue chain is Insulin (51 aa).

3 disulfides stabilise this stretch: Cys-7-Cys-37, Cys-19-Cys-50, and Cys-36-Cys-41.

Belongs to the insulin family. As to quaternary structure, heterodimer of a B chain and an A chain linked by two disulfide bonds.

The protein localises to the secreted. Insulin decreases blood glucose concentration. It increases cell permeability to monosaccharides, amino acids and fatty acids. It accelerates glycolysis, the pentose phosphate cycle, and glycogen synthesis in liver. The polypeptide is Insulin (INS) (Alligator mississippiensis (American alligator)).